The following is a 234-amino-acid chain: Leucyl/phenylalanyl-tRNA--protein transferase (234 aa).

This sequence belongs to the L/F-transferase family.

Its subcellular location is the cytoplasm. The catalysed reaction is N-terminal L-lysyl-[protein] + L-leucyl-tRNA(Leu) = N-terminal L-leucyl-L-lysyl-[protein] + tRNA(Leu) + H(+). It carries out the reaction N-terminal L-arginyl-[protein] + L-leucyl-tRNA(Leu) = N-terminal L-leucyl-L-arginyl-[protein] + tRNA(Leu) + H(+). The enzyme catalyses L-phenylalanyl-tRNA(Phe) + an N-terminal L-alpha-aminoacyl-[protein] = an N-terminal L-phenylalanyl-L-alpha-aminoacyl-[protein] + tRNA(Phe). Its function is as follows. Functions in the N-end rule pathway of protein degradation where it conjugates Leu, Phe and, less efficiently, Met from aminoacyl-tRNAs to the N-termini of proteins containing an N-terminal arginine or lysine. The protein is Leucyl/phenylalanyl-tRNA--protein transferase of Escherichia coli O157:H7 (strain EC4115 / EHEC).